Here is a 1044-residue protein sequence, read N- to C-terminus: Diacylglycerol lipase-alpha (1044 aa).

Residues 1-22 (MPGIVVFRRRWSVGSDDLVLPA) lie on the Cytoplasmic side of the membrane. A helical transmembrane segment spans residues 23 to 43 (IFLFLLHTTWFVILSVVLFGL). Residues 44–60 (VYNPHEACSLNLVDHGR) are Extracellular-facing. Residues 61 to 81 (GYLGILLSCMIAEMAIIWLSM) traverse the membrane as a helical segment. Residues 82-101 (RGGILYTEPRDSMQYVLYVR) are Cytoplasmic-facing. A helical membrane pass occupies residues 102–122 (LAILVIEFIYAIVGIVWLTQY). Residues 123–136 (YTSCNDLTAKNVTL) lie on the Extracellular side of the membrane. Asparagine 133 is a glycosylation site (N-linked (GlcNAc...) asparagine). Residues 137 to 157 (GMVVCNWVVILSVCITVLCVF) form a helical membrane-spanning segment. Residues 158–1044 (DPTGRTFVKL…KQDDLVISAR (887 aa)) lie on the Cytoplasmic side of the membrane. Catalysis depends on charge relay system residues serine 472 and aspartate 524. 11 positions are modified to phosphoserine: serine 728, serine 730, serine 733, serine 744, serine 784, serine 786, serine 808, serine 810, serine 835, serine 849, and serine 954. The tract at residues 848–897 (LSKHSQDTQPLEAALGSGGVTPERPPSATIEEEEAAGGSEGGGVAPRGEL) is disordered. Positions 1013–1044 (QECLATDKIRTSTPTGHGASPTKQDDLVISAR) are disordered. At threonine 1025 the chain carries Phosphothreonine.

This sequence belongs to the AB hydrolase superfamily. Lipase family. In terms of assembly, interacts (via C-terminal) with CAMK2A; leading to the phosphorylation and inhibition of DAGLA enzymatic activity. Interacts (via PPXXF motif) with HOMER1 and HOMER2; this interaction is required for DAGLA membrane localization. Ca(2+) is required as a cofactor. Post-translationally, phosphorylated at Ser-784 and Ser-810 by CAMK2A; phosphorylation by CAMK2A inhibits diacylglycerol lipase activity. Highly expressed by principal cells in the hippocampus. In embryonic brains, it is present in axonal tracts, while in adults it localizes to dendritic fields, correlating with the developmental change in requirement for 2-AG synthesis from the pre- to the postsynaptic compartment. Concentrated in heads of dendritic spines throughout the hippocampal formation. Highly compartmentalized into a wide perisynaptic annulus around the postsynaptic density of axospinous contacts but not intrasynaptically (at protein level).

It is found in the cell membrane. It localises to the cell projection. The protein resides in the dendritic spine membrane. The protein localises to the postsynaptic density membrane. Its subcellular location is the early endosome membrane. The catalysed reaction is a 1,2-diacyl-sn-glycerol + H2O = a 2-acylglycerol + a fatty acid + H(+). It carries out the reaction 1-octadecanoyl-2-(5Z,8Z,11Z,14Z-eicosatetraenoyl)-sn-glycerol + H2O = 2-(5Z,8Z,11Z,14Z-eicosatetraenoyl)-glycerol + octadecanoate + H(+). It catalyses the reaction 1,2-di-(9Z-octadecenoyl)-sn-glycerol + H2O = 2-(9Z-octadecenoyl)-glycerol + (9Z)-octadecenoate + H(+). The enzyme catalyses 1-(9Z-octadecenoyl)-2-(5Z,8Z,11Z,14Z-eicosatetraenoyl)-sn-glycerol + H2O = 2-(5Z,8Z,11Z,14Z-eicosatetraenoyl)-glycerol + (9Z)-octadecenoate + H(+). The catalysed reaction is 1-(9Z-octadecenoyl)-2-octadecanoyl-sn-glycerol + H2O = 2-octadecanoylglycerol + (9Z)-octadecenoate + H(+). It carries out the reaction 1-(9Z-octadecenoyl)-2-(9Z,12Z-octadecadienoyl)-sn-glycerol + H2O = 2-(9Z,12Z-octadecadienoyl)-glycerol + (9Z)-octadecenoate + H(+). It catalyses the reaction 1-(9Z-octadecenoyl)-2-O-(5Z,8Z,11Z,14Z-eicosatetraenyl)-sn-glycerol + H2O = 2-O-(5Z,8Z,11Z,14Z)-eicosatetraenylglycerol + (9Z)-octadecenoate + H(+). With respect to regulation, inhibited by 1,2,3-triazole urea covalent inhibitor KT172, DH376 and DO34. Inhibited by p-hydroxy-mercuri-benzoate and HgCl(2), but not to PMSF. Also inhibited by RHC80267. Diacylglycerol lipase activity is inhibited by the phosphorylation of Ser-784 and Ser-810 by CAMK2A. Its function is as follows. Serine hydrolase that hydrolyzes arachidonic acid-esterified diacylglycerols (DAGs) to produce the principal endocannabinoid (eCB), 2-arachidonoylglycerol (2-AG). Preferentially hydrolyzes sn-1 fatty acids from diacylglycerols (DAG) that contain arachidonic acid (AA) esterified at the sn-2 position to biosynthesize 2-AG. Has negligible activity against other lipids including monoacylglycerols and phospholipids. Plays a key role in regulating 2-AG signaling in the central nervous system (CNS). Controls the activity of 2-AG as a retrograde messenger at neuronal synapses. Supports axonal growth during development and adult neurogenesis. Plays a role for eCB signaling in the physiological regulation of anxiety and depressive behaviors. Also regulates neuroinflammatory responses in the brain, in particular, LPS-induced microglial activation. In Mus musculus (Mouse), this protein is Diacylglycerol lipase-alpha (Dagla).